The following is a 499-amino-acid chain: Glutamyl-tRNA(Gln) amidotransferase subunit A (499 aa).

Residues lysine 80 and serine 155 each act as charge relay system in the active site. The active-site Acyl-ester intermediate is the serine 179.

The protein belongs to the amidase family. GatA subfamily. In terms of assembly, heterotrimer of A, B and C subunits.

The catalysed reaction is L-glutamyl-tRNA(Gln) + L-glutamine + ATP + H2O = L-glutaminyl-tRNA(Gln) + L-glutamate + ADP + phosphate + H(+). In terms of biological role, allows the formation of correctly charged Gln-tRNA(Gln) through the transamidation of misacylated Glu-tRNA(Gln) in organisms which lack glutaminyl-tRNA synthetase. The reaction takes place in the presence of glutamine and ATP through an activated gamma-phospho-Glu-tRNA(Gln). This chain is Glutamyl-tRNA(Gln) amidotransferase subunit A, found in Cupriavidus metallidurans (strain ATCC 43123 / DSM 2839 / NBRC 102507 / CH34) (Ralstonia metallidurans).